Here is a 202-residue protein sequence, read N- to C-terminus: LexA repressor (202 aa).

The H-T-H motif DNA-binding region spans 28–48 (QQEIARAFGFRSLGTVRNYLV). Catalysis depends on for autocatalytic cleavage activity residues serine 120 and lysine 157.

The protein belongs to the peptidase S24 family. As to quaternary structure, homodimer.

The catalysed reaction is Hydrolysis of Ala-|-Gly bond in repressor LexA.. Its function is as follows. Represses a number of genes involved in the response to DNA damage (SOS response), including recA and lexA. In the presence of single-stranded DNA, RecA interacts with LexA causing an autocatalytic cleavage which disrupts the DNA-binding part of LexA, leading to derepression of the SOS regulon and eventually DNA repair. The sequence is that of LexA repressor from Syntrophotalea carbinolica (strain DSM 2380 / NBRC 103641 / GraBd1) (Pelobacter carbinolicus).